We begin with the raw amino-acid sequence, 237 residues long: Uridylate kinase (237 aa).

Residue 12-15 (KLSG) coordinates ATP. Residues 20-25 (GEDGLG) are involved in allosteric activation by GTP. UMP is bound at residue Gly54. Gly55 and Arg59 together coordinate ATP. Residues Asp74 and 135–142 (TGNPFFTT) each bind UMP. 3 residues coordinate ATP: Thr162, Tyr168, and Asp171.

It belongs to the UMP kinase family. As to quaternary structure, homohexamer.

It is found in the cytoplasm. It catalyses the reaction UMP + ATP = UDP + ADP. Its pathway is pyrimidine metabolism; CTP biosynthesis via de novo pathway; UDP from UMP (UMPK route): step 1/1. Its activity is regulated as follows. Allosterically activated by GTP. Inhibited by UTP. Its function is as follows. Catalyzes the reversible phosphorylation of UMP to UDP. The sequence is that of Uridylate kinase from Haemophilus influenzae (strain PittEE).